The sequence spans 466 residues: Ceramide glucosyltransferase 1 (466 aa).

Residues 70 to 90 (LALSGCIFVSVLYLVHIIAFF) form a helical membrane-spanning segment. Position 148 (D148) is a short sequence motif, D1. A short sequence motif (D2) is located at residue D200. Position 294 (D294) is a short sequence motif, D3. D294 (proton acceptor) is an active-site residue. The short motif at 330 to 334 (RIGRW) is the (Q/R)XXRW element. Helical transmembrane passes span 354–374 (CVTS…YSVY) and 403–423 (TPFL…FIFI).

The protein belongs to the glycosyltransferase 2 family. As to expression, expressed in excretory canals, pharyngeal intestinal valve, intestine and intestinal rectal valve.

The protein localises to the membrane. The catalysed reaction is an N-acylsphing-4-enine + UDP-alpha-D-glucose = a beta-D-glucosyl-(1&lt;-&gt;1')-N-acylsphing-4-enine + UDP + H(+). It carries out the reaction an N-acyl-15-methylhexadecasphing-4-enine + UDP-alpha-D-glucose = an N-acyl-1-beta-D-glucosyl-15-methylhexadecasphing-4-enine + UDP + H(+). It participates in lipid metabolism; sphingolipid metabolism. Its function is as follows. Catalyzes the first glycosylation step in glycosphingolipid biosynthesis, the transfer of glucose to ceramide to produce glucosylceramides (GlcCer). GlcCer are known to contribute to the physical properties and physiological functions of membranes and may regulate signal transduction. Only branched-chain sphingoid bases like 15-methylhexadecasphing-4-enine are used for generating complex sphingolipids in Caenorhabditis elegans. Together with cgt-3, plays a role in the trafficking of proteins such as mig-14 to the cell membrane in intestinal cells. This chain is Ceramide glucosyltransferase 1, found in Caenorhabditis elegans.